The sequence spans 272 residues: 3-methyl-2-oxobutanoate hydroxymethyltransferase (272 aa).

D43 and D82 together coordinate Mg(2+). 3-methyl-2-oxobutanoate contacts are provided by residues 43 to 44, D82, and K112; that span reads DS. E114 is a binding site for Mg(2+). E179 serves as the catalytic Proton acceptor.

It belongs to the PanB family. In terms of assembly, homodecamer; pentamer of dimers. Requires Mg(2+) as cofactor.

Its subcellular location is the cytoplasm. It carries out the reaction 3-methyl-2-oxobutanoate + (6R)-5,10-methylene-5,6,7,8-tetrahydrofolate + H2O = 2-dehydropantoate + (6S)-5,6,7,8-tetrahydrofolate. The protein operates within cofactor biosynthesis; (R)-pantothenate biosynthesis; (R)-pantoate from 3-methyl-2-oxobutanoate: step 1/2. In terms of biological role, catalyzes the reversible reaction in which hydroxymethyl group from 5,10-methylenetetrahydrofolate is transferred onto alpha-ketoisovalerate to form ketopantoate. The protein is 3-methyl-2-oxobutanoate hydroxymethyltransferase of Staphylococcus aureus (strain MRSA252).